A 428-amino-acid chain; its full sequence is ATP phosphoribosyltransferase regulatory subunit (428 aa).

This sequence belongs to the class-II aminoacyl-tRNA synthetase family. HisZ subfamily. As to quaternary structure, heteromultimer composed of HisG and HisZ subunits.

The protein localises to the cytoplasm. The protein operates within amino-acid biosynthesis; L-histidine biosynthesis; L-histidine from 5-phospho-alpha-D-ribose 1-diphosphate: step 1/9. In terms of biological role, required for the first step of histidine biosynthesis. May allow the feedback regulation of ATP phosphoribosyltransferase activity by histidine. In Syntrophotalea carbinolica (strain DSM 2380 / NBRC 103641 / GraBd1) (Pelobacter carbinolicus), this protein is ATP phosphoribosyltransferase regulatory subunit.